Consider the following 89-residue polypeptide: Small ribosomal subunit protein uS14A (89 aa).

Belongs to the universal ribosomal protein uS14 family. As to quaternary structure, part of the 30S ribosomal subunit. Contacts proteins S3 and S10.

Functionally, binds 16S rRNA, required for the assembly of 30S particles and may also be responsible for determining the conformation of the 16S rRNA at the A site. The chain is Small ribosomal subunit protein uS14A from Staphylococcus saprophyticus subsp. saprophyticus (strain ATCC 15305 / DSM 20229 / NCIMB 8711 / NCTC 7292 / S-41).